The chain runs to 384 residues: 1-deoxy-D-xylulose 5-phosphate reductoisomerase (384 aa).

Residues Thr10, Gly11, Ser12, Ile13, Gly36, and Asn122 each coordinate NADPH. A 1-deoxy-D-xylulose 5-phosphate-binding site is contributed by Lys123. Glu124 provides a ligand contact to NADPH. Position 148 (Asp148) interacts with Mn(2+). 4 residues coordinate 1-deoxy-D-xylulose 5-phosphate: Ser149, Glu150, Ser174, and His197. Mn(2+) is bound at residue Glu150. Gly203 contacts NADPH. 4 residues coordinate 1-deoxy-D-xylulose 5-phosphate: Ser210, Asn215, Lys216, and Glu219. A Mn(2+)-binding site is contributed by Glu219.

This sequence belongs to the DXR family. The cofactor is Mg(2+). Mn(2+) serves as cofactor.

The catalysed reaction is 2-C-methyl-D-erythritol 4-phosphate + NADP(+) = 1-deoxy-D-xylulose 5-phosphate + NADPH + H(+). It functions in the pathway isoprenoid biosynthesis; isopentenyl diphosphate biosynthesis via DXP pathway; isopentenyl diphosphate from 1-deoxy-D-xylulose 5-phosphate: step 1/6. Its function is as follows. Catalyzes the NADPH-dependent rearrangement and reduction of 1-deoxy-D-xylulose-5-phosphate (DXP) to 2-C-methyl-D-erythritol 4-phosphate (MEP). The polypeptide is 1-deoxy-D-xylulose 5-phosphate reductoisomerase (Chlorobium phaeobacteroides (strain DSM 266 / SMG 266 / 2430)).